A 121-amino-acid polypeptide reads, in one-letter code: Small ribosomal subunit protein uS13 (121 aa).

Residues 91–121 (HRMSLPVRGQRTRTNARTRRGSRKTVAGRKK) form a disordered region. A compositionally biased stretch (basic residues) spans 100–121 (QRTRTNARTRRGSRKTVAGRKK).

It belongs to the universal ribosomal protein uS13 family. Part of the 30S ribosomal subunit. Forms a loose heterodimer with protein S19. Forms two bridges to the 50S subunit in the 70S ribosome.

Its function is as follows. Located at the top of the head of the 30S subunit, it contacts several helices of the 16S rRNA. In the 70S ribosome it contacts the 23S rRNA (bridge B1a) and protein L5 of the 50S subunit (bridge B1b), connecting the 2 subunits; these bridges are implicated in subunit movement. Contacts the tRNAs in the A and P-sites. This chain is Small ribosomal subunit protein uS13, found in Prochlorococcus marinus (strain MIT 9312).